The primary structure comprises 125 residues: Translation initiation factor 5A (125 aa).

At lysine 35 the chain carries Hypusine.

The protein belongs to the eIF-5A family.

It localises to the cytoplasm. Functionally, functions by promoting the formation of the first peptide bond. This Methanoregula boonei (strain DSM 21154 / JCM 14090 / 6A8) protein is Translation initiation factor 5A (eIF5A).